The chain runs to 303 residues: 2-dehydropantoate 2-reductase (303 aa).

NADP(+) contacts are provided by residues 7 to 12 (GAGSLG), Arg35, Asn103, Ala129, and Arg131. Asn103 contributes to the substrate binding site. Lys182 (proton donor) is an active-site residue. Residues Asn186, Asn190, Asn200, and Ser250 each coordinate substrate. Residue Glu262 participates in NADP(+) binding.

This sequence belongs to the ketopantoate reductase family.

Its subcellular location is the cytoplasm. It catalyses the reaction (R)-pantoate + NADP(+) = 2-dehydropantoate + NADPH + H(+). It functions in the pathway cofactor biosynthesis; (R)-pantothenate biosynthesis; (R)-pantoate from 3-methyl-2-oxobutanoate: step 2/2. Functionally, catalyzes the NADPH-dependent reduction of ketopantoate into pantoic acid. The chain is 2-dehydropantoate 2-reductase (panE) from Pseudomonas aeruginosa (strain ATCC 15692 / DSM 22644 / CIP 104116 / JCM 14847 / LMG 12228 / 1C / PRS 101 / PAO1).